We begin with the raw amino-acid sequence, 207 residues long: Large ribosomal subunit protein uL4 (207 aa).

Positions 55–76 (ALVSGGGKKPWRQKGTGRARHG) are disordered. The segment covering 63–76 (KPWRQKGTGRARHG) has biased composition (basic residues).

It belongs to the universal ribosomal protein uL4 family. Part of the 50S ribosomal subunit.

In terms of biological role, one of the primary rRNA binding proteins, this protein initially binds near the 5'-end of the 23S rRNA. It is important during the early stages of 50S assembly. It makes multiple contacts with different domains of the 23S rRNA in the assembled 50S subunit and ribosome. Forms part of the polypeptide exit tunnel. The chain is Large ribosomal subunit protein uL4 from Phytoplasma mali (strain AT).